The sequence spans 337 residues: F420-dependent glucose-6-phosphate dehydrogenase (337 aa).

Aspartate 44 is a coenzyme F420-(gamma-Glu)n binding site. Residue histidine 45 is the Proton donor of the active site. Coenzyme F420-(gamma-Glu)n-binding positions include threonine 81 and threonine 112–glycine 113. The active-site Proton acceptor is glutamate 114. Residues asparagine 117, glycine 180 to glycine 181, and glycine 183 to valine 184 contribute to the coenzyme F420-(gamma-Glu)n site. The substrate site is built by threonine 198, lysine 201, lysine 262, and arginine 286.

The protein belongs to the F420-dependent glucose-6-phosphate dehydrogenase family. In terms of assembly, homodimer.

It carries out the reaction oxidized coenzyme F420-(gamma-L-Glu)(n) + D-glucose 6-phosphate + H(+) = 6-phospho-D-glucono-1,5-lactone + reduced coenzyme F420-(gamma-L-Glu)(n). Its function is as follows. Catalyzes the coenzyme F420-dependent oxidation of glucose 6-phosphate (G6P) to 6-phosphogluconolactone. The sequence is that of F420-dependent glucose-6-phosphate dehydrogenase from Kineococcus radiotolerans (strain ATCC BAA-149 / DSM 14245 / SRS30216).